A 413-amino-acid chain; its full sequence is Sulfoquinovose isomerase (413 aa).

6-sulfo-beta-D-quinovose contacts are provided by arginine 55, tyrosine 111, asparagine 172, histidine 176, and arginine 238. The active-site Proton donor/acceptor is the histidine 248. Glutamate 251, glutamine 362, glutamine 379, and histidine 383 together coordinate 6-sulfo-beta-D-quinovose. The active-site Proton donor/acceptor is histidine 383.

It belongs to the N-acylglucosamine 2-epimerase family. In terms of assembly, homohexamer.

The enzyme catalyses 6-sulfo-beta-D-quinovose = 6-deoxy-6-sulfo-D-fructose. It carries out the reaction 6-sulfo-beta-D-quinovose = 6-sulfo-D-rhamnose. With respect to regulation, significantly inhibited by Cu(2+), Fe(3+) and Co(2+). Partially inhibited by Mg(2+), Ca(2+) and Mn(2+). Also inhibited by ATP, ADP, dATP, TTP and GTP. Catalyzes the isomerization of sulfoquinovose (SQ) to 6-deoxy-6-sulfo-D-fructose (SF). Can also catalyze the interconversion of SQ and sulforhamnose (SR). Has a clear preference for beta-SQ and little-to-no activity on alpha-SQ. In vitro, can also catalyze the interconversion of mannose, fructose and glucose, or lyxose and xylulose, but has extremely low activity with glucose. This Escherichia coli (strain K12) protein is Sulfoquinovose isomerase (yihS).